Reading from the N-terminus, the 367-residue chain is Methylthioribose-1-phosphate isomerase (367 aa).

Asp-250 (proton donor) is an active-site residue.

This sequence belongs to the eIF-2B alpha/beta/delta subunits family. MtnA subfamily.

Its subcellular location is the cytoplasm. It localises to the nucleus. It catalyses the reaction 5-(methylsulfanyl)-alpha-D-ribose 1-phosphate = 5-(methylsulfanyl)-D-ribulose 1-phosphate. The protein operates within amino-acid biosynthesis; L-methionine biosynthesis via salvage pathway; L-methionine from S-methyl-5-thio-alpha-D-ribose 1-phosphate: step 1/6. Its function is as follows. Catalyzes the interconversion of methylthioribose-1-phosphate (MTR-1-P) into methylthioribulose-1-phosphate (MTRu-1-P). In Zea mays (Maize), this protein is Methylthioribose-1-phosphate isomerase (IDI2).